A 590-amino-acid chain; its full sequence is Nuclear receptor subfamily 2 group C member 1 (590 aa).

A required for interaction with KAT2B region spans residues 1–166 (MATIEEIAHQ…RLQRCIAFGM (166 aa)). Positions 98-173 (FDLCVVCGDK…FGMKQDSVQC (76 aa)) form a DNA-binding region, nuclear receptor. NR C4-type zinc fingers lie at residues 101–121 (CVVCGDKASGRHYGAITCEGC) and 137–156 (CRGSKDCIINKHHRNRCQYC). A phosphoserine mark is found at serine 185 and serine 203. Phosphothreonine is present on threonine 208. At threonine 210 the chain carries Phosphothreonine; by MAPK1. A Glycyl lysine isopeptide (Lys-Gly) (interchain with G-Cter in SUMO); alternate cross-link involves residue lysine 238. A Glycyl lysine isopeptide (Lys-Gly) (interchain with G-Cter in SUMO2); alternate cross-link involves residue lysine 238. In terms of domain architecture, NR LBD spans 333–577 (ESMEGSTHLI…SVIPHILKME (245 aa)). Serine 568 carries the post-translational modification Phosphoserine; by PKC. A required for interaction with NRIP1 region spans residues 571-590 (PHILKMEPADYNSQIIGHSL). Lysine 575 participates in a covalent cross-link: Glycyl lysine isopeptide (Lys-Gly) (interchain with G-Cter in SUMO2).

This sequence belongs to the nuclear hormone receptor family. NR2 subfamily. As to quaternary structure, homodimer. Heterodimer; with NR2C2 which is required for chromatin remodeling and for binding to promoter regions such as globin DR1 repeats. Interacts with ESR1; the interaction prevents homodimerization of ESR1 and suppresses its transcriptional activity and cell growth. Interacts with NRIP1 (via its LXXLL motifs); the interaction provides corepressor activity. Interacts with HDAC3 (via the DNA-binding domain); the interaction recruits phosphorylated NR2C1 to PML bodies for sumoylation. Interacts with HDAC4 (via the DNA-binding domain). Interacts with PIAS1; the interaction is required for sumoylation of NR2C1. Interacts with UBE2I; the interaction is required for sumoylation of NR2C1. Interacts with KAT2B; the interaction acts as a corepressor of gene expression. In terms of processing, sumoylation requires both PIAS1 and UBE2I. Sumoylation appears to dissociate NR2C1 from the PML nuclear bodies. Enhances the interaction with NRIP1 but inhibits interaction with KAT2B. In proliferating cells, stimulation by all-trans retinoic acid, activation of MAPK1-mediated phosphorylation and recruitment to PML bodies with subsequent sumoylation, suppresses OCT4 expression. Post-translationally, phosphorylated on several serine and threonine residues. Phosphorylation on Thr-210, stimulated by all-trans retinoic acid (atRA) mediates PML location and sumoylation in proliferating cells which then modulates its association with effector molecules, KAT2B and NRIP1. Phosphorylation on Ser-568 by PKC is important for protein stability and function as activator of RARB.

The protein resides in the nucleus. It localises to the PML body. In terms of biological role, orphan nuclear receptor. Binds the IR7 element in the promoter of its own gene in an autoregulatory negative feedback mechanism. Primarily repressor of a broad range of genes including ESR1 and RARB. Together with NR2C2, forms the core of the DRED (direct repeat erythroid-definitive) complex that represses embryonic and fetal globin transcription. Binds to hormone response elements (HREs) consisting of two 5'-AGGTCA-3' half site direct repeat consensus sequences. Also activator of OCT4 gene expression. Plays a fundamental role in early embryogenesis and regulates embryonic stem cell proliferation and differentiation. Mediator of retinoic acid-regulated preadipocyte proliferation. This Rattus norvegicus (Rat) protein is Nuclear receptor subfamily 2 group C member 1 (Nr2c1).